Here is a 433-residue protein sequence, read N- to C-terminus: Legumain (433 aa).

A signal peptide spans 1–17 (MIWEFTVLLSLVLGTGA). A propeptide spanning residues 18 to 25 (VPLEDPED) is cleaved from the precursor. Asparagine 91 is a glycosylation site (N-linked (GlcNAc...) asparagine). Histidine 148 is a catalytic residue. The N-linked (GlcNAc...) asparagine glycan is linked to asparagine 167. The active-site Nucleophile is the cysteine 189. Asparagine 263 and asparagine 272 each carry an N-linked (GlcNAc...) asparagine glycan. A propeptide spanning residues 324–433 (DLQESRRLVQ…SMNKVCHGYY (110 aa)) is cleaved from the precursor. Cystine bridges form between cysteine 378–cysteine 412 and cysteine 390–cysteine 429.

This sequence belongs to the peptidase C13 family. Homodimer before autocatalytic removal of the propeptide. Monomer after autocatalytic processing. May interact with integrins. In terms of processing, activated by autocatalytic processing at pH 4. Detected in kidney (at protein level).

It is found in the lysosome. The catalysed reaction is Hydrolysis of proteins and small molecule substrates at -Asn-|-Xaa- bonds.. Functionally, has a strict specificity for hydrolysis of asparaginyl bonds. Can also cleave aspartyl bonds slowly, especially under acidic conditions. Involved in the processing of proteins for MHC class II antigen presentation in the lysosomal/endosomal system. Also involved in MHC class I antigen presentation in cross-presenting dendritic cells by mediating cleavage and maturation of Perforin-2 (MPEG1), thereby promoting antigen translocation in the cytosol. Required for normal lysosomal protein degradation in renal proximal tubules. Required for normal degradation of internalized EGFR. Plays a role in the regulation of cell proliferation via its role in EGFR degradation. The sequence is that of Legumain (LGMN) from Bos taurus (Bovine).